A 580-amino-acid chain; its full sequence is DNA ligase 1 (580 aa).

Glu-245 serves as a coordination point for ATP. Catalysis depends on Lys-247, which acts as the N6-AMP-lysine intermediate. Arg-252, Arg-267, Glu-297, Phe-343, Arg-420, and Lys-426 together coordinate ATP.

The protein belongs to the ATP-dependent DNA ligase family. The cofactor is Mg(2+).

It catalyses the reaction ATP + (deoxyribonucleotide)n-3'-hydroxyl + 5'-phospho-(deoxyribonucleotide)m = (deoxyribonucleotide)n+m + AMP + diphosphate.. Functionally, DNA ligase that seals nicks in double-stranded DNA during DNA replication, DNA recombination and DNA repair. In Methanosarcina acetivorans (strain ATCC 35395 / DSM 2834 / JCM 12185 / C2A), this protein is DNA ligase 1.